Consider the following 688-residue polypeptide: Transcription factor GTE9 (688 aa).

Positions methionine 1–cysteine 36 are disordered. The Bromo domain maps to threonine 132 to leucine 238. An NET domain is found at glutamate 280–lysine 361. Residues glycine 423–glutamate 505 form a disordered region. A Phosphoserine modification is found at serine 478. Polar residues predominate over residues glutamine 491–lysine 500. Residues glutamate 505–aspartate 688 form a transcription activation domain region. Positions threonine 534 to lysine 613 form a coiled coil. A disordered region spans residues phenylalanine 660–aspartate 688.

Interacts with BT1.

It is found in the nucleus. This is Transcription factor GTE9 (GTE9) from Arabidopsis thaliana (Mouse-ear cress).